The following is a 910-amino-acid chain: Anoctamin-6 (910 aa).

Over 1–300 (MKKMSRNVLL…YGEKIGIYFA (300 aa)) the chain is Cytoplasmic. A helical transmembrane segment spans residues 301–321 (WLGYYTQMLLLAAVVGVACFL). At 322–375 (YGYLNQDNCTWSKEVCHPDIGGKIIMCPQCDRLCPFWKLNITCESSKKLCIFDS) the chain is on the extracellular side. N-linked (GlcNAc...) asparagine glycosylation occurs at Asn-329. 5 cysteine pairs are disulfide-bonded: Cys-330/Cys-371, Cys-337/Cys-364, Cys-348/Cys-806, Cys-351/Cys-355, and Cys-595/Cys-600. N-linked (GlcNAc...) asparagine glycosylation is present at Asn-361. Residues 376-396 (FGTLVFAVFMGVWVTLFLEFW) traverse the membrane as a helical segment. At 397–455 (KRRQAELEYEWDTVELQQEEQARPEYEARCTHVVINEITQEEERIPFTAWGKCIRITLC) the chain is on the cytoplasmic side. The chain crosses the membrane as a helical span at residues 456–476 (ASAVFFWILLIIASVIGIIVY). The Extracellular segment spans residues 477-509 (RLSVFIVFSAKLPKNINGTDPIQKYLTPQTATS). An N-linked (GlcNAc...) asparagine glycan is attached at Asn-493. The helical transmembrane segment at 510–530 (ITASIISFIIIMILNTIYEKV) threads the bilayer. Residues 531–551 (AIMITNFELPRTQTDYENSLT) are Cytoplasmic-facing. A helical membrane pass occupies residues 552–572 (MKMFLFQFVNYYSSCFYIAFF). Residues 573–601 (KGKFVGYPGDPVYWLGKYRNEECDPGGCL) are Extracellular-facing. The helical transmembrane segment at 602-621 (LELTTQLTIIMGGKAIWNNI) threads the bilayer. At 622–663 (QEVLLPWIMNLIGRFHRVSGSEKITPRWEQDYHLQPMGKLGL) the chain is on the cytoplasmic side. The Ca(2+) site is built by Glu-623, Glu-666, and Glu-669. Transmembrane regions (helical) follow at residues 664–684 (FYEY…VASF) and 685–705 (PLAP…DAWK). Topologically, residues 706 to 722 (LTTQFRRLVPEKAQDIG) are cytoplasmic. The chain crosses the membrane as a helical span at residues 723 to 743 (AWQPIMQGIAILAVVTNAMII). Over 744–836 (AFTSDMIPRL…YWHVIAAKLA (93 aa)) the chain is Extracellular. N-linked (GlcNAc...) asparagine glycosylation is found at Asn-777, Asn-790, and Asn-802. The helical transmembrane segment at 837 to 857 (FIIVMEHVIYSVKFFISYAIP) threads the bilayer. Residues 858 to 910 (DVSKRTKSKIQREKYLTQKLLHENHLKDMTKNMGVIAERMIEAVDNNLRPKSE) lie on the Cytoplasmic side of the membrane.

The protein belongs to the anoctamin family. In terms of assembly, homodimer. Expressed in embryonic stem cell, fetal liver, retina, chronic myologenous leukemia and intestinal cancer.

It localises to the cell membrane. The catalysed reaction is a 1,2-diacyl-sn-glycero-3-phospho-L-serine(in) = a 1,2-diacyl-sn-glycero-3-phospho-L-serine(out). It catalyses the reaction a beta-D-galactosyl-(1&lt;-&gt;1')-N-acylsphing-4-enine(out) = a beta-D-galactosyl-(1&lt;-&gt;1')-N-acylsphing-4-enine(in). It carries out the reaction a 1,2-diacyl-sn-glycero-3-phosphocholine(in) = a 1,2-diacyl-sn-glycero-3-phosphocholine(out). Its activity is regulated as follows. Exhibits synergistic gating by Ca(2+) and voltage. Inhibited by some non-specific cation channel blockers such as: ruthenium red, 2-aminoethyl diphenylborinate (2APB), gadolinium and cadmium ions. (Microbial infection) Activated by SARS coronavirus-2/SARS-CoV-2 spike protein. Small-conductance calcium-activated nonselective cation (SCAN) channel which acts as a regulator of phospholipid scrambling in platelets and osteoblasts. Phospholipid scrambling results in surface exposure of phosphatidylserine which in platelets is essential to trigger the clotting system whereas in osteoblasts is essential for the deposition of hydroxyapatite during bone mineralization. Has calcium-dependent phospholipid scramblase activity; scrambles phosphatidylserine, phosphatidylcholine and galactosylceramide. Can generate outwardly rectifying chloride channel currents in airway epithelial cells and Jurkat T lymphocytes. Its function is as follows. (Microbial infection) Upon SARS coronavirus-2/SARS-CoV-2 infection, is activated by spike protein which increases the amplitude of spontaneous Ca(2+) signals and is required for spike-mediated syncytia. This is Anoctamin-6 from Homo sapiens (Human).